Reading from the N-terminus, the 182-residue chain is PTS system glucitol/sorbitol-specific EIIC component (182 aa).

Positions 1–182 (MDAIVYFAKG…IELSNQLKAN (182 aa)) constitute a PTS EIIC type-5 domain. Transmembrane regions (helical) follow at residues 28-48 (GIIPKVLLLLVFMNSIIAFIG), 63-83 (VILAYGVLPFLSAFMLGNPMA), and 139-159 (TALGLRYLLVGLVMNFFAGWV).

It localises to the cell membrane. Its function is as follows. The phosphoenolpyruvate-dependent sugar phosphotransferase system (PTS), a major carbohydrate active transport system, catalyzes the phosphorylation of incoming sugar substrates concomitant with their translocation across the cell membrane. The enzyme II complex composed of SrlA, SrlB and SrlE is involved in glucitol/sorbitol transport. This chain is PTS system glucitol/sorbitol-specific EIIC component (srlA), found in Clostridium beijerinckii (strain ATCC 51743 / NCIMB 8052) (Clostridium acetobutylicum).